The primary structure comprises 683 residues: THO complex subunit 5 (683 aa).

The tract at residues 1–42 (MSSESSKKRKPKVIRSDGAPAEGKRNRSDTEQEGKYYSEEAE) is disordered. Serine 2 is modified (N-acetylserine). The segment at 2–144 (SSESSKKRKP…YEVMHLQKEI (143 aa)) is interaction with CSF1R. Positions 2-199 (SSESSKKRKP…RLDWELEQRK (198 aa)) are interaction with THOC7. 2 positions are modified to phosphoserine: serine 5 and serine 6. The Nuclear localization signal motif lies at 7-10 (KKRK). Residues 22–42 (EGKRNRSDTEQEGKYYSEEAE) show a composition bias toward basic and acidic residues. Positions 81-247 (AIEIEERRIQ…QASLPVQEYL (167 aa)) form a coiled coil. Lysine 153 is covalently cross-linked (Glycyl lysine isopeptide (Lys-Gly) (interchain with G-Cter in SUMO2)). A Phosphotyrosine; by SRC modification is found at tyrosine 225. The segment at 247–683 (LFMPFDQAHK…NHPQGFFSHR (437 aa)) is tandem RWD domains. Residues 301–336 (FKPPEDSQDDESDSDAEEEQTTKRRRPTLGVQLDDK) form a disordered region. Acidic residues predominate over residues 306 to 319 (DSQDDESDSDAEEE). A phosphoserine mark is found at serine 307, serine 312, and serine 314. Phosphothreonine is present on threonine 328.

The protein belongs to the THOC5 family. In terms of assembly, component of the THO subcomplex, which is composed of THOC1, THOC2, THOC3, THOC5, THOC6 and THOC7. The THO subcomplex interacts with DDX39B to form the THO-DDX39B complex which multimerizes into a 28-subunit tetrameric assembly. Component of the transcription/export (TREX) complex at least composed of ALYREF/THOC4, DDX39B, SARNP/CIP29, CHTOP and the THO subcomplex; in the complex interacts with THOC1, THOC2, THOC5, THOC6 and THOC7; forms a coiled-coil dimer with THOC7; together with THOC6 and THOC7, plays a key structural role in oligomerization of the THO-DDX39B complex. TREX seems to have a dynamic structure involving ATP-dependent remodeling. Interacts with phosphorylated CSF1R. Interacts (via N-terminus) with the NTF2 domain of NXF1. Forms a complex with CEBPB. Interacts with CPSF6; indicative for an association with the cleavage factor Im (CFIm) complex. Interacts with LUZP4. Interacts with NCBP3. In terms of processing, phosphorylated on tyrosine upon binding to activated CSF1R; which causes a dissociation of the two proteins. Phosphorylation on Ser-5 and/or Ser-6 is required for nuclear export. Phosphorylated on Thr-328 in insulin-stimulated adipocytes. Phosphorylation at Tyr-225 modulates mRNA binding. As to expression, ubiquitously expressed.

Its subcellular location is the nucleus. The protein resides in the cytoplasm. Functionally, component of the THO subcomplex of the TREX complex which is thought to couple mRNA transcription, processing and nuclear export, and which specifically associates with spliced mRNA and not with unspliced pre-mRNA. Plays a key structural role in the oligomerization of the THO-DDX39B complex. TREX is recruited to spliced mRNAs by a transcription-independent mechanism, binds to mRNA upstream of the exon-junction complex (EJC) and is recruited in a splicing- and cap-dependent manner to a region near the 5' end of the mRNA where it functions in mRNA export to the cytoplasm via the TAP/NXF1 pathway. THOC5 in conjunction with ALYREF/THOC4 functions in NXF1-NXT1 mediated nuclear export of HSP70 mRNA; both proteins enhance the RNA binding activity of NXF1 and are required for NXF1 localization to the nuclear rim. Involved in transcription elongation and genome stability. Involved in alternative polyadenylation site choice by recruiting CPSF6 to 5' region of target genes; probably mediates association of the TREX and CFIm complexes. Its function is as follows. Regulates the expression of myeloid transcription factors CEBPA, CEBPB and GAB2 by enhancing the levels of phosphatidylinositol 3,4,5-trisphosphate. May be involved in the differentiation of granulocytes and adipocytes. Essential for hematopoietic primitive cell survival and plays an integral role in monocytic development. In terms of biological role, (Microbial infection) The TREX complex is essential for the export of Kaposi's sarcoma-associated herpesvirus (KSHV) intronless mRNAs and infectious virus production. The sequence is that of THO complex subunit 5 (THOC5) from Homo sapiens (Human).